We begin with the raw amino-acid sequence, 508 residues long: Photosystem II CP47 reaction center protein (508 aa).

6 helical membrane passes run 21–36, 101–115, 140–156, 203–218, 237–252, and 457–472; these read SVHIMHTALVAGWAGS, IVFSGLCFLAAIWHW, GIHLFLSGLACFGFGAF, IAAGTLGILAGLFHLS, VLSSSIAAVFFAAFVV, and SFALLFFFGHIWHGAR.

Belongs to the PsbB/PsbC family. PsbB subfamily. PSII is composed of 1 copy each of membrane proteins PsbA, PsbB, PsbC, PsbD, PsbE, PsbF, PsbH, PsbI, PsbJ, PsbK, PsbL, PsbM, PsbT, PsbX, PsbY, PsbZ, Psb30/Ycf12, at least 3 peripheral proteins of the oxygen-evolving complex and a large number of cofactors. It forms dimeric complexes. Binds multiple chlorophylls. PSII binds additional chlorophylls, carotenoids and specific lipids. serves as cofactor.

Its subcellular location is the plastid. It localises to the chloroplast thylakoid membrane. One of the components of the core complex of photosystem II (PSII). It binds chlorophyll and helps catalyze the primary light-induced photochemical processes of PSII. PSII is a light-driven water:plastoquinone oxidoreductase, using light energy to abstract electrons from H(2)O, generating O(2) and a proton gradient subsequently used for ATP formation. The protein is Photosystem II CP47 reaction center protein of Vitis vinifera (Grape).